The primary structure comprises 257 residues: Type III pantothenate kinase (257 aa).

Residue 5 to 12 (DIGNTNIK) coordinates ATP. Residue 107–110 (GSDR) coordinates substrate. Residue D109 is the Proton acceptor of the active site. T133 serves as a coordination point for ATP.

This sequence belongs to the type III pantothenate kinase family. Homodimer. NH4(+) serves as cofactor. The cofactor is K(+).

The protein localises to the cytoplasm. It carries out the reaction (R)-pantothenate + ATP = (R)-4'-phosphopantothenate + ADP + H(+). The protein operates within cofactor biosynthesis; coenzyme A biosynthesis; CoA from (R)-pantothenate: step 1/5. Catalyzes the phosphorylation of pantothenate (Pan), the first step in CoA biosynthesis. The protein is Type III pantothenate kinase of Ehrlichia ruminantium (strain Gardel).